We begin with the raw amino-acid sequence, 587 residues long: Beta-(1--&gt;2)glucan export ATP-binding/permease protein NdvA (587 aa).

The ABC transmembrane type-1 domain maps to 21–301 (VSLVVVANIV…MRQFATQIFE (281 aa)). Helical transmembrane passes span 23–43 (LVVVANIVLATITIAEPILFG), 57–77 (PILFMWATFAVFNTIAFVLVA), 128–148 (GLWLEFMRNHLSTVIALALLI), 158–178 (LSAVLMVLAIAYWLIGRVVMS), 248–268 (MASTIAMMVVLIIGTMLVQAG), and 272–292 (VGDVIAFIGFANLLIGRLDLM). In terms of domain architecture, ABC transporter spans 335–569 (IEFRDVSFGF…NGRFAALLRA (235 aa)). Residue 368–375 (GPTGAGKT) coordinates ATP.

Belongs to the ABC transporter superfamily. Beta-(1--&gt;2)glucan exporter (TC 3.A.1.108.1) family. As to quaternary structure, homodimer.

It localises to the cell inner membrane. The catalysed reaction is [(1-&gt;2)-beta-D-glucosyl](n)(in) + ATP + H2O = [(1-&gt;2)-beta-D-glucosyl](n)(out) + ADP + phosphate + H(+). Its function is as follows. Involved in beta-(1--&gt;2)glucan export. Transmembrane domains (TMD) form a pore in the inner membrane and the ATP-binding domain (NBD) is responsible for energy generation. The protein is Beta-(1--&gt;2)glucan export ATP-binding/permease protein NdvA of Rhizobium johnstonii (strain DSM 114642 / LMG 32736 / 3841) (Rhizobium leguminosarum bv. viciae).